A 278-amino-acid chain; its full sequence is Adenosylcobinamide-GDP ribazoletransferase (278 aa).

The next 6 helical transmembrane spans lie at 44–64 (GIGV…QLLL), 69–89 (FTPL…TGGF), 121–141 (AFGA…LALL), 161–181 (VCAA…VMIW), 204–224 (GGLA…SLAL), and 227–247 (INLI…LRFF).

It belongs to the CobS family. It depends on Mg(2+) as a cofactor.

Its subcellular location is the cell inner membrane. The enzyme catalyses alpha-ribazole + adenosylcob(III)inamide-GDP = adenosylcob(III)alamin + GMP + H(+). The catalysed reaction is alpha-ribazole 5'-phosphate + adenosylcob(III)inamide-GDP = adenosylcob(III)alamin 5'-phosphate + GMP + H(+). It functions in the pathway cofactor biosynthesis; adenosylcobalamin biosynthesis; adenosylcobalamin from cob(II)yrinate a,c-diamide: step 7/7. Functionally, joins adenosylcobinamide-GDP and alpha-ribazole to generate adenosylcobalamin (Ado-cobalamin). Also synthesizes adenosylcobalamin 5'-phosphate from adenosylcobinamide-GDP and alpha-ribazole 5'-phosphate. The protein is Adenosylcobinamide-GDP ribazoletransferase of Polaromonas naphthalenivorans (strain CJ2).